The following is a 120-amino-acid chain: Ribosome-binding factor A (120 aa).

This sequence belongs to the RbfA family. In terms of assembly, monomer. Binds 30S ribosomal subunits, but not 50S ribosomal subunits or 70S ribosomes.

The protein resides in the cytoplasm. In terms of biological role, one of several proteins that assist in the late maturation steps of the functional core of the 30S ribosomal subunit. Associates with free 30S ribosomal subunits (but not with 30S subunits that are part of 70S ribosomes or polysomes). Required for efficient processing of 16S rRNA. May interact with the 5'-terminal helix region of 16S rRNA. The sequence is that of Ribosome-binding factor A from Chlorobaculum parvum (strain DSM 263 / NCIMB 8327) (Chlorobium vibrioforme subsp. thiosulfatophilum).